We begin with the raw amino-acid sequence, 1133 residues long: Eukaryotic translation initiation factor 3 subunit A (1133 aa).

In terms of domain architecture, PCI spans 317–498; that stretch reads IQRMTSHVLI…HCVHFGTDLS (182 aa). Coiled-coil stretches lie at residues 573 to 700 and 784 to 886; these read KKIE…YFER and EEER…EADS. The segment covering 810–893 has biased composition (basic and acidic residues); that stretch reads KEEERRRAEE…ADSWRDRRGG (84 aa). A disordered region spans residues 810-1133; the sequence is KEEERRRAEE…DGWTDVKHHR (324 aa). The span at 895-909 shows a compositional bias: low complexity; it reads APAAAAQPNPAAQEA. Composition is skewed to basic and acidic residues over residues 920–944, 954–1081, and 1097–1117; these read GAREPRGEDAPKKDGVYQPRFRDVR, VERR…DSAW, and TRQDQAKPKDDRREERPKEAR.

Belongs to the eIF-3 subunit A family. In terms of assembly, component of the eukaryotic translation initiation factor 3 (eIF-3) complex.

The protein resides in the cytoplasm. RNA-binding component of the eukaryotic translation initiation factor 3 (eIF-3) complex, which is involved in protein synthesis of a specialized repertoire of mRNAs and, together with other initiation factors, stimulates binding of mRNA and methionyl-tRNAi to the 40S ribosome. The eIF-3 complex specifically targets and initiates translation of a subset of mRNAs involved in cell proliferation. This Aedes aegypti (Yellowfever mosquito) protein is Eukaryotic translation initiation factor 3 subunit A.